We begin with the raw amino-acid sequence, 213 residues long: Phosphoenolpyruvate guanylyltransferase (213 aa).

Residues Thr-146, Gly-161, and Ser-164 each coordinate phosphoenolpyruvate.

The protein belongs to the CofC family.

It catalyses the reaction phosphoenolpyruvate + GTP + H(+) = enolpyruvoyl-2-diphospho-5'-guanosine + diphosphate. The protein operates within cofactor biosynthesis; coenzyme F420 biosynthesis. Its function is as follows. Guanylyltransferase that catalyzes the activation of phosphoenolpyruvate (PEP) as enolpyruvoyl-2-diphospho-5'-guanosine, via the condensation of PEP with GTP. It is involved in the biosynthesis of coenzyme F420, a hydride carrier cofactor. The sequence is that of Phosphoenolpyruvate guanylyltransferase from Mycolicibacterium vanbaalenii (strain DSM 7251 / JCM 13017 / BCRC 16820 / KCTC 9966 / NRRL B-24157 / PYR-1) (Mycobacterium vanbaalenii).